The chain runs to 501 residues: REAREKETKALSLSRALEEALEAKEEFERQNKQLRADMEDLMSSKDDVGKNVHELEKSKRALEQQVEEMRTQLEELEDELQATEDAKLRLEVNTQAMKAQFERDLQARDEQSEEKKRLLTKQVRELEAELEDERKQRALAVASKKKMEIDLKDLEAQIEAANKARERRVKQLRRLQAQMKDYQRELEEARGSRDEIFAQSKESEKKLKSLEAEILQLQEELASSERARRHAEQERDELADEIANSASGKSALLDEKRRLEARMRQLEEELEEEQSNMELLNDRFRKTTLQVDTLNAELAAERSAAQKSDNARQQLERQNKDLKAKLQELEGAVKSKFKATISALEAKIGQLEEQLEQEAKERAAANKLVRRTEKKLKEIFMQVEDERRHADQYKEQMEKANARMKQLKRQLEEAEEEATRANASRRKLQRELDDATEANEGLSREVSTLKNRLRRGGPISFSSSRSGRPQLHIEGASLELSDDDTESKTSDVNETQPPQSE.

Positions 1–457 (REAREKETKA…TLKNRLRRGG (457 aa)) form a coiled coil. The rodlike tail (S2 and LMM domains) stretch occupies residues 1 to 501 (REAREKETKA…VNETQPPQSE (501 aa)). Disordered stretches follow at residues 182 to 202 (YQRE…QSKE), 221 to 254 (LASS…ALLD), and 397 to 501 (MEKA…PQSE). The segment covering 223–233 (SSERARRHAEQ) has biased composition (basic and acidic residues). A compositionally biased stretch (polar residues) spans 492–501 (VNETQPPQSE).

As to quaternary structure, muscle myosin is a hexameric protein that consists of 2 heavy chain subunits (MHC), 2 alkali light chain subunits (MLC) and 2 regulatory light chain subunits (MLC-2).

It is found in the cytoplasm. It localises to the myofibril. In terms of biological role, muscle contraction. The sequence is that of Myosin heavy chain, embryonic smooth muscle isoform from Oryctolagus cuniculus (Rabbit).